The chain runs to 943 residues: U3 small nucleolar RNA-associated protein 12 (943 aa).

10 WD repeats span residues 77–107 (AKPAECTYLEAHKDTDLLAVGYADGVIKVWD), 119–149 (GHKAAITLLQFDGTGTRLISGSKDSNIIVWD), 161–190 (SHKDSITGFWCQGEDWLISTSKDGMIKLWD), 202–230 (AHTGECWGLAVKDDLLITTGTDSQVKIWK), 389–418 (GQRTDVRSIDISDDNKLLATASNGSLKIWN), 428–458 (FECGYALTCKFLPGGLLVILGTRNGELQLFD), 471–501 (AHDAAIWSLDLTSDGKRLVTGSADKTVKFWD), 571–601 (GHKLPVLSIDISFDSKMIITSSADKNIKIWG), 613–643 (AHQDSIMNVKFLPQSHNFFSCSKDAVVKYWD), and 655–685 (AHQSEVWALAVATDGGFVVSSSHDHSIRIWE). Residues 715–739 (EGNGDDAFKADASGEGVEDEASGVH) are disordered.

It belongs to the WD repeat WDR3/UTP12 family. Interacts with snoRNA U3. Interacts with MPP10. Component of the ribosomal small subunit (SSU) processome composed of at least 40 protein subunits and snoRNA U3.

It is found in the nucleus. Its subcellular location is the nucleolus. Its function is as follows. Involved in nucleolar processing of pre-18S ribosomal RNA. This is U3 small nucleolar RNA-associated protein 12 (DIP2) from Saccharomyces cerevisiae (strain ATCC 204508 / S288c) (Baker's yeast).